A 319-amino-acid polypeptide reads, in one-letter code: Probable carboxylesterase 5 (319 aa).

Methionine 1 carries the N-acetylmethionine modification. The Involved in the stabilization of the negatively charged intermediate by the formation of the oxyanion hole signature appears at 79 to 81 (HGG). Residues serine 163, aspartate 262, and histidine 294 contribute to the active site.

It belongs to the 'GDXG' lipolytic enzyme family. Expressed in roots, leaves, stems, flowers and siliques.

It catalyses the reaction a carboxylic ester + H2O = an alcohol + a carboxylate + H(+). In terms of biological role, carboxylesterase acting on esters with varying acyl chain length. The protein is Probable carboxylesterase 5 (CXE5) of Arabidopsis thaliana (Mouse-ear cress).